The sequence spans 408 residues: Peptidoglycan muramidase Tse3 (408 aa).

9 residues coordinate Ca(2+): asparagine 181, aspartate 253, glutamine 254, glutamate 258, glutamate 375, serine 378, arginine 379, aspartate 382, and asparagine 384.

Forms a heterotetramer with Tsi3 consisting of two Tse3 dimers and two Tsi3 dimers. Formation of the complex inactivates Tse3 enzymatic activity. It depends on Ca(2+) as a cofactor.

It is found in the host membrane. The protein resides in the secreted. The catalysed reaction is Hydrolysis of (1-&gt;4)-beta-linkages between N-acetylmuramic acid and N-acetyl-D-glucosamine residues in a peptidoglycan and between N-acetyl-D-glucosamine residues in chitodextrins.. Enzymatic activity depends on membrane binding. Toxin secreted by the H1 type VI (H1-T6SS) secretion system into the periplasm of recipient cells. Degrades peptidoglycan via muramidase activity thereby helping itself to compete with other bacteria. To protect itself, the bacterium synthesizes immunity protein Tsi3 that specifically interacts with and inactivates cognate toxin. The polypeptide is Peptidoglycan muramidase Tse3 (Pseudomonas aeruginosa (strain ATCC 15692 / DSM 22644 / CIP 104116 / JCM 14847 / LMG 12228 / 1C / PRS 101 / PAO1)).